The primary structure comprises 1441 residues: Protein clueless (1441 aa).

Disordered stretches follow at residues Met1–Thr79 and Val106–Ser131. The segment covering Lys8 to Lys22 has biased composition (polar residues). A compositionally biased stretch (basic residues) spans Ala54–Asn63. Low complexity-rich tracts occupy residues Lys64 to Thr79 and Val106 to Ser126. Ser273 bears the Phosphoserine mark. The region spanning Arg427–Leu669 is the Clu domain. Residues Lys726–Glu753 are compositionally biased toward basic and acidic residues. Disordered regions lie at residues Lys726–Lys769 and Glu961–Thr1009. Residues Lys964–Ser977 are compositionally biased toward basic residues. Residues Lys978–Thr1009 show a composition bias toward low complexity. TPR repeat units lie at residues Ala1109–Val1142, Ala1235–Tyr1268, and Gly1270–Thr1303.

Belongs to the CLU family.

The protein resides in the cytoplasm. Its function is as follows. mRNA-binding protein involved in proper cytoplasmic distribution of mitochondria. The sequence is that of Protein clueless from Drosophila willistoni (Fruit fly).